A 455-amino-acid chain; its full sequence is Keratin, type I cuticular Ha5 (455 aa).

The segment at 1 to 97 (MASKCLKASF…FGEGILTGNE (97 aa)) is head. Residues 97-408 (EKETMQFLND…GLLDSEDCKL (312 aa)) form the IF rod domain. Residues 98 to 132 (KETMQFLNDRLASYLEKVRQLERENAELESRIRDW) form a coil 1A region. The segment at 133–143 (CEQQVPYLCPD) is linker 1. Positions 144 to 244 (YQSYFQTIEE…HEEEVNSLRC (101 aa)) are coil 1B. Residues 245 to 260 (QLGDRLNVEVDAAPPV) form a linker 12 region. A coil 2 region spans residues 261-404 (DLNRVLNEMR…STYRGLLDSE (144 aa)). The tail stretch occupies residues 405 to 455 (DCKLPCNPCAPDHSPSKSCLPCLPAASCGPGTAHTTCSPRPICVSCPGSRF).

Belongs to the intermediate filament family.

This chain is Keratin, type I cuticular Ha5, found in Ovis aries (Sheep).